Reading from the N-terminus, the 106-residue chain is Isocitrate dehydrogenase [NAD] subunit gamma, mitochondrial (106 aa).

Belongs to the isocitrate and isopropylmalate dehydrogenases family. In terms of assembly, heterooligomer of subunits alpha (IDH3A), beta (IDH3B), and gamma (IDH3G) in the apparent ratio of 2:1:1. The heterodimer containing one IDH3A and one IDH3B subunit and the heterodimer containing one IDH3A and one IDH3G subunit assemble into a heterotetramer (which contains two subunits of IDH3A, one of IDH3B and one of IDH3G) and further into the heterooctamer.

Its subcellular location is the mitochondrion. Its activity is regulated as follows. The heterotetramer and the heterodimer composed of IDH3A and IDH3G subunits can be allosterically activated by citrate (CIT) or/and ADP, and the two activators can act independently or synergistically. The heterodimer composed of IDH3A and IDH3B subunits cannot be allosterically regulated and the allosteric regulation of the heterotetramer is through the IDH3G subunit and not the IDH3B subunit. The IDH3G subunit contains the allosteric site which consists of a CIT-binding site and an ADP-binding site, and the binding of CIT and ADP causes conformational changes at the allosteric site which are transmitted to the active site in the catalytic subunit (IDH3A) through a cascade of conformational changes at the heterodimer interface, leading to stabilization of the isocitrate-binding at the active site and thus activation of the enzyme. ATP can activate the heterotetramer and the heterodimer composed of IDH3A and IDH3G subunits at low concentrations but inhibits their activities at high concentrations, whereas ATP exhibits only inhibitory effect on the heterodimer composed of IDH3A and IDH3B subunits. Regulatory subunit which plays a role in the allosteric regulation of the enzyme catalyzing the decarboxylation of isocitrate (ICT) into alpha-ketoglutarate. The heterodimer composed of the alpha (IDH3A) and beta (IDH3B) subunits and the heterodimer composed of the alpha (IDH3A) and gamma (IDH3G) subunits, have considerable basal activity but the full activity of the heterotetramer (containing two subunits of IDH3A, one of IDH3B and one of IDH3G) requires the assembly and cooperative function of both heterodimers. This is Isocitrate dehydrogenase [NAD] subunit gamma, mitochondrial (IDH3G) from Sus scrofa (Pig).